Consider the following 1541-residue polypeptide: ATP-binding cassette sub-family C member 2 (1541 aa).

Residues 1-26 (MDKFCNSTFWDLSLLESPEADLPLCF) lie on the Extracellular side of the membrane. N6 carries N-linked (GlcNAc...) asparagine glycosylation. Residues 27 to 47 (EQTVLVWIPLGFLWLLAPWQL) traverse the membrane as a helical segment. Residues 48–67 (YSVYRSRTKRSSITKFYLAK) are Cytoplasmic-facing. A helical membrane pass occupies residues 68 to 88 (QVFVVFLLILAAIDLSLALTE). Over 89-92 (DTGQ) the chain is Extracellular. A helical transmembrane segment spans residues 93 to 113 (ATVPPVRYTNPILYLCTWLLV). At 114–125 (LAVQHSRQWCVR) the chain is on the cytoplasmic side. A helical transmembrane segment spans residues 126-146 (KNSWFLSLFWILSVLCGVFQF). Residues 147 to 164 (QTLIRALLKDSKSNMAYS) lie on the Extracellular side of the membrane. The helical transmembrane segment at 165–185 (YLFFVSYGFQIVLLILTAFSG) threads the bilayer. Residues 186 to 309 (PSDSTQTPSV…DYPKSWLIKS (124 aa)) are Cytoplasmic-facing. Phosphoserine occurs at positions 279 and 281. Residues 310-330 (LFKTFHVVILKSFILKLIHDL) form a helical membrane-spanning segment. The ABC transmembrane type-1 1 domain occupies 318-601 (ILKSFILKLI…LPMVTSSILQ (284 aa)). Residues 331–356 (LVFLNPQLLKLLIGFVKSSNSYVWFG) lie on the Extracellular side of the membrane. The chain crosses the membrane as a helical span at residues 357–377 (YICAILMFAVTLIQSFCLQSY). Residues 378–433 (FQHCFVLGMCVRTTVMSSIYKKALTLSNLARKQYTIGETVNLMSVDSQKLMDATNY) are Cytoplasmic-facing. The chain crosses the membrane as a helical span at residues 434–454 (MQLVWSSVIQITLSIFFLWRE). At 455–457 (LGP) the chain is on the extracellular side. Residues 458-478 (SILAGVGVMVLLIPVNGVLAT) traverse the membrane as a helical segment. The Cytoplasmic portion of the chain corresponds to 479 to 540 (KIRNIQVQNM…NLLRFGQLQS (62 aa)). Residues 541 to 561 (LLIFILQITPILVSVVTFSVY) form a helical membrane-spanning segment. Topologically, residues 562–583 (VLVDSANVLNAEKAFTSITLFN) are extracellular. Residues 584-604 (ILRFPLSMLPMVTSSILQASV) form a helical membrane-spanning segment. Over 605-967 (SVDRLERYLG…VKFSIYLKYL (363 aa)) the chain is Cytoplasmic. The ABC transporter 1 domain maps to 633–857 (VKFSEASFTW…KGVFARNWKT (225 aa)). 667 to 674 (GTVGSGKS) contacts ATP. 2 disordered regions span residues 862-881 (SGPE…DDDD) and 901-923 (RENS…GKSL). A Phosphoserine modification is found at S874. The span at 906-915 (RRTLSRSSRS) shows a compositional bias: low complexity. 2 positions are modified to phosphoserine: S922 and S926. Residues 968–988 (QAVGWWSILFIILFYGLNNVA) form a helical membrane-spanning segment. In terms of domain architecture, ABC transmembrane type-1 2 spans 975-1260 (ILFIILFYGL…LVRMTSEAET (286 aa)). Topologically, residues 989–1029 (FIGSNLWLSAWTSDSDNLNGTNNSSSHRDMRIGVFGALGLA) are extracellular. N-linked (GlcNAc...) asparagine glycosylation is found at N1007, N1010, and N1011. Residues 1030 to 1050 (QGICLLISTLWSIYACRNASK) form a helical membrane-spanning segment. Topologically, residues 1051–1093 (ALHGQLLTNILRAPMRFFDTTPTGRIVNRFSGDISTVDDLLPQ) are cytoplasmic. A helical membrane pass occupies residues 1094 to 1114 (TLRSWMMCFFGIAGTLVMICM). Position 1115 (A1115) is a topological domain, extracellular. The chain crosses the membrane as a helical span at residues 1116 to 1136 (TPVFAIIIIPLSILYISVQVF). The Cytoplasmic segment spans residues 1137-1207 (YVATSRQLRR…TSNRWLAIRL (71 aa)). The chain crosses the membrane as a helical span at residues 1208 to 1228 (ELVGNLVVFCSALLLVIYRKT). Residues 1229 to 1230 (LT) lie on the Extracellular side of the membrane. A helical membrane pass occupies residues 1231-1251 (GDVVGFVLSNALNITQTLNWL). Over 1252-1541 (VRMTSEAETN…GIENVNHTEL (290 aa)) the chain is Cytoplasmic. One can recognise an ABC transporter 2 domain in the interval 1296–1530 (IQFNNYQVRY…RGSFYLMAKE (235 aa)). 1330–1337 (GRTGAGKS) lines the ATP pocket. The residue at position 1434 (S1434) is a Phosphoserine.

Belongs to the ABC transporter superfamily. ABCC family. Conjugate transporter (TC 3.A.1.208) subfamily. Mainly expressed in the liver.

It is found in the apical cell membrane. It catalyses the reaction an S-substituted glutathione(in) + ATP + H2O = an S-substituted glutathione(out) + ADP + phosphate + H(+). It carries out the reaction taurolithocholate 3-sulfate(in) + ATP + H2O = taurolithocholate 3-sulfate(out) + ADP + phosphate + H(+). The enzyme catalyses ATP + H2O + xenobioticSide 1 = ADP + phosphate + xenobioticSide 2.. The catalysed reaction is 17beta-estradiol 17-O-(beta-D-glucuronate)(in) + ATP + H2O = 17beta-estradiol 17-O-(beta-D-glucuronate)(out) + ADP + phosphate + H(+). It catalyses the reaction leukotriene C4(in) + ATP + H2O = leukotriene C4(out) + ADP + phosphate + H(+). It carries out the reaction (4Z,15Z)-bilirubin IXalpha C8-beta-D-glucuronoside(in) + ATP + H2O = (4Z,15Z)-bilirubin IXalpha C8-beta-D-glucuronoside(out) + ADP + phosphate + H(+). The enzyme catalyses (4Z,15Z)-bilirubin IXalpha C8,C12-beta-D-bisglucuronoside(in) + ATP + H2O = (4Z,15Z)-bilirubin IXalpha C8,C12-beta-D-bisglucuronoside(out) + ADP + phosphate + H(+). ATP-dependent transporter of the ATP-binding cassette (ABC) family that binds and hydrolyzes ATP to enable active transport of various substrates including many drugs, toxicants and endogenous compound across cell membranes. Transports a wide variety of conjugated organic anions such as sulfate-, glucuronide- and glutathione (GSH)-conjugates of endo- and xenobiotics substrates. Mediates hepatobiliary excretion of mono- and bis-glucuronidated bilirubin molecules and therefore play an important role in bilirubin detoxification. Also mediates hepatobiliary excretion of others glucuronide conjugates such as 17beta-estradiol 17-glucosiduronic acid and leukotriene C4. Transports sulfated bile salt such as taurolithocholate sulfate. Transports various anticancer drugs, such as anthracycline, vinca alkaloid and methotrexate and HIV-drugs such as protease inhibitors. In Rattus norvegicus (Rat), this protein is ATP-binding cassette sub-family C member 2.